The primary structure comprises 465 residues: Ribulose bisphosphate carboxylase large chain (465 aa).

Lys-4 carries the N6,N6,N6-trimethyllysine modification. Asn-113 and Thr-163 together coordinate substrate. Catalysis depends on Lys-165, which acts as the Proton acceptor. Lys-167 lines the substrate pocket. Lys-191, Asp-193, and Glu-194 together coordinate Mg(2+). The residue at position 191 (Lys-191) is an N6-carboxylysine. The Proton acceptor role is filled by His-284. Positions 285, 317, and 369 each coordinate substrate.

Belongs to the RuBisCO large chain family. Type I subfamily. As to quaternary structure, heterohexadecamer of 8 large chains and 8 small chains; disulfide-linked. The disulfide link is formed within the large subunit homodimers. Mg(2+) serves as cofactor. In terms of processing, the disulfide bond which can form in the large chain dimeric partners within the hexadecamer appears to be associated with oxidative stress and protein turnover.

Its subcellular location is the plastid. The protein localises to the chloroplast. The enzyme catalyses 2 (2R)-3-phosphoglycerate + 2 H(+) = D-ribulose 1,5-bisphosphate + CO2 + H2O. The catalysed reaction is D-ribulose 1,5-bisphosphate + O2 = 2-phosphoglycolate + (2R)-3-phosphoglycerate + 2 H(+). Functionally, ruBisCO catalyzes two reactions: the carboxylation of D-ribulose 1,5-bisphosphate, the primary event in carbon dioxide fixation, as well as the oxidative fragmentation of the pentose substrate in the photorespiration process. Both reactions occur simultaneously and in competition at the same active site. The protein is Ribulose bisphosphate carboxylase large chain of Humiria balsamifera (Tauroniro).